The primary structure comprises 608 residues: Probable Ufm1-specific protease 2 (608 aa).

Residues Cys441, Asp565, and His567 contribute to the active site.

Belongs to the peptidase C78 family.

In terms of biological role, thiol protease which recognizes and hydrolyzes the peptide bond at the C-terminal Gly of UFM1, a ubiquitin-like modifier protein bound to a number of target proteins. Does not hydrolyze SUMO1 or ISG15 ubiquitin-like proteins. The polypeptide is Probable Ufm1-specific protease 2 (Drosophila pseudoobscura pseudoobscura (Fruit fly)).